The following is a 160-amino-acid chain: Large ribosomal subunit protein uL16 (160 aa).

Residues 138 to 160 (INLSSDSSGEGKTGKDSKEEVKK) form a disordered region. Basic and acidic residues predominate over residues 149-160 (KTGKDSKEEVKK).

This sequence belongs to the universal ribosomal protein uL16 family. Part of the 50S ribosomal subunit.

In terms of biological role, binds 23S rRNA and is also seen to make contacts with the A and possibly P site tRNAs. This Prochlorococcus marinus subsp. pastoris (strain CCMP1986 / NIES-2087 / MED4) protein is Large ribosomal subunit protein uL16.